The chain runs to 327 residues: E3 ubiquitin-protein ligase SINAT4 (327 aa).

The interval 1–27 (METDSMECVSSTGNEIHQNGNGHQSYQ) is disordered. Residues 8-27 (CVSSTGNEIHQNGNGHQSYQ) show a composition bias toward polar residues. The RING-type zinc finger occupies 64-100 (CPVCTYSMYPPIHQCHNGHTLCSTCKVRVHNRCPTCR). Positions 114–307 (VAESLELPCK…KELKLRVTGK (194 aa)) are SBD. Residues 117-177 (SLELPCKFYN…LVAHLRDDHK (61 aa)) form an SIAH-type zinc finger. Positions 122, 129, 141, 145, 152, 159, 171, and 176 each coordinate Zn(2+).

It belongs to the SINA (Seven in absentia) family. Interacts with SINAT6. Interacts with WAV3. Interacts with FREE1. Interacts with ELC/VPS23A.

The protein resides in the endosome. It localises to the multivesicular body. Its subcellular location is the cytoplasmic vesicle. The protein localises to the autophagosome. It carries out the reaction S-ubiquitinyl-[E2 ubiquitin-conjugating enzyme]-L-cysteine + [acceptor protein]-L-lysine = [E2 ubiquitin-conjugating enzyme]-L-cysteine + N(6)-ubiquitinyl-[acceptor protein]-L-lysine.. Its pathway is protein modification; protein ubiquitination. E3 ubiquitin-protein ligase that mediates ubiquitination and subsequent proteasomal degradation of target proteins. E3 ubiquitin ligases accept ubiquitin from an E2 ubiquitin-conjugating enzyme in the form of a thioester and then directly transfers the ubiquitin to targeted substrates. It probably triggers the ubiquitin-mediated degradation of different substrates. Modulates directly the ubiquitination and proteasomal-dependent degradation of FREE1, a component of the ESCRT-I complex. Modulates directly the ubiquitination and proteasomal-dependent degradation of ELC/VPS23A, a component of the ESCRT-I complex. In Arabidopsis thaliana (Mouse-ear cress), this protein is E3 ubiquitin-protein ligase SINAT4.